We begin with the raw amino-acid sequence, 44 residues long: Photosystem II reaction center protein K (44 aa).

The propeptide occupies 1 to 7; that stretch reads MESLLLA. A helical membrane pass occupies residues 23–43; the sequence is LPIIPVFFLLLAFVWQAAIGF.

It belongs to the PsbK family. PSII is composed of 1 copy each of membrane proteins PsbA, PsbB, PsbC, PsbD, PsbE, PsbF, PsbH, PsbI, PsbJ, PsbK, PsbL, PsbM, PsbT, PsbX, PsbY, PsbZ, Psb30/Ycf12, at least 3 peripheral proteins of the oxygen-evolving complex and a large number of cofactors. It forms dimeric complexes.

It is found in the plastid. The protein resides in the chloroplast thylakoid membrane. Its function is as follows. One of the components of the core complex of photosystem II (PSII). PSII is a light-driven water:plastoquinone oxidoreductase that uses light energy to abstract electrons from H(2)O, generating O(2) and a proton gradient subsequently used for ATP formation. It consists of a core antenna complex that captures photons, and an electron transfer chain that converts photonic excitation into a charge separation. The chain is Photosystem II reaction center protein K from Trieres chinensis (Marine centric diatom).